The sequence spans 445 residues: Trigger factor (445 aa).

A PPIase FKBP-type domain is found at 171-256 (NDIVIIDFKG…VHVVNEVETP (86 aa)).

The protein belongs to the FKBP-type PPIase family. Tig subfamily.

Its subcellular location is the cytoplasm. It catalyses the reaction [protein]-peptidylproline (omega=180) = [protein]-peptidylproline (omega=0). Its function is as follows. Involved in protein export. Acts as a chaperone by maintaining the newly synthesized protein in an open conformation. Functions as a peptidyl-prolyl cis-trans isomerase. This is Trigger factor from Malacoplasma penetrans (strain HF-2) (Mycoplasma penetrans).